The chain runs to 205 residues: Glycerol-3-phosphate acyltransferase (205 aa).

5 consecutive transmembrane segments (helical) span residues 4–24 (IAPGLVLLAYLCGSISSAILV), 80–100 (PFWLGLVAIAACVGHIWPVFF), 107–127 (GVATAFGAIAPIGLDLTGVMA), 130–150 (WLLTILLSGYSSLGAIVSALI), and 155–175 (VWWFKPQYTFPVSMLSCLILL).

This sequence belongs to the PlsY family. As to quaternary structure, probably interacts with PlsX.

The protein resides in the cell inner membrane. The enzyme catalyses an acyl phosphate + sn-glycerol 3-phosphate = a 1-acyl-sn-glycero-3-phosphate + phosphate. Its pathway is lipid metabolism; phospholipid metabolism. Its function is as follows. Catalyzes the transfer of an acyl group from acyl-phosphate (acyl-PO(4)) to glycerol-3-phosphate (G3P) to form lysophosphatidic acid (LPA). This enzyme utilizes acyl-phosphate as fatty acyl donor, but not acyl-CoA or acyl-ACP. The polypeptide is Glycerol-3-phosphate acyltransferase (Klebsiella pneumoniae subsp. pneumoniae (strain ATCC 700721 / MGH 78578)).